The chain runs to 423 residues: Glutamate-1-semialdehyde 2,1-aminomutase (423 aa).

At Lys266 the chain carries N6-(pyridoxal phosphate)lysine.

The protein belongs to the class-III pyridoxal-phosphate-dependent aminotransferase family. HemL subfamily. In terms of assembly, homodimer. It depends on pyridoxal 5'-phosphate as a cofactor.

Its subcellular location is the cytoplasm. It catalyses the reaction (S)-4-amino-5-oxopentanoate = 5-aminolevulinate. Its pathway is porphyrin-containing compound metabolism; protoporphyrin-IX biosynthesis; 5-aminolevulinate from L-glutamyl-tRNA(Glu): step 2/2. The protein is Glutamate-1-semialdehyde 2,1-aminomutase of Desulfovibrio desulfuricans (strain ATCC 27774 / DSM 6949 / MB).